The following is a 244-amino-acid chain: MPSLLLQLPLRLCRLWPHSLSIRLLTAATGQRSVPTNYYELLGVHPGASAEEIKRAFFTKSKELHPDRDPGNPALHSRFVELNEAYRVLSREESRRNYDHQLHSASPPKSSGSTAEPKYTQQTHSSWEPPNAQYWAQFHSVRPQGPESRKQQRKHNQRVLGYCLLLMVAGMGLHYVAFRKLEQVHRSFMDEKDRIITAIYNDTRARARANRARIQQERQQRQQPRAEPSLPPESSRIMPQDTSP.

Residues 37 to 102 (NYYELLGVHP…ESRRNYDHQL (66 aa)) enclose the J domain. Positions 96-127 (RNYDHQLHSASPPKSSGSTAEPKYTQQTHSSW) are disordered. A compositionally biased stretch (polar residues) spans 103 to 127 (HSASPPKSSGSTAEPKYTQQTHSSW). The helical transmembrane segment at 159-178 (VLGYCLLLMVAGMGLHYVAF) threads the bilayer. The tract at residues 208-244 (RANRARIQQERQQRQQPRAEPSLPPESSRIMPQDTSP) is disordered.

The protein localises to the membrane. The sequence is that of DnaJ homolog subfamily C member 4 (Dnajc4) from Mus musculus (Mouse).